Reading from the N-terminus, the 391-residue chain is Phosphoglycerate kinase (391 aa).

Substrate contacts are provided by residues 21 to 23 (DLN), Arg-36, 59 to 62 (HLGR), Arg-113, and Arg-146. Residues Lys-197, Glu-319, and 345–348 (GGDT) each bind ATP.

It belongs to the phosphoglycerate kinase family. Monomer.

Its subcellular location is the cytoplasm. The catalysed reaction is (2R)-3-phosphoglycerate + ATP = (2R)-3-phospho-glyceroyl phosphate + ADP. Its pathway is carbohydrate degradation; glycolysis; pyruvate from D-glyceraldehyde 3-phosphate: step 2/5. The chain is Phosphoglycerate kinase from Shewanella piezotolerans (strain WP3 / JCM 13877).